The chain runs to 353 residues: Phospho-N-acetylmuramoyl-pentapeptide-transferase (353 aa).

The next 10 membrane-spanning stretches (helical) occupy residues 24–44, 66–86, 88–108, 129–149, 160–180, 192–212, 229–249, 256–276, 281–301, and 330–350; these read LGFF…ILWA, TPTM…VLCA, LGNL…FVGF, FGML…KGLD, PLFE…FLST, GLAS…VYVA, VGEL…FLWY, VFMG…NAIV, ILLV…ILQV, and KVIV…LLSL.

It belongs to the glycosyltransferase 4 family. MraY subfamily. Mg(2+) is required as a cofactor.

It is found in the cell inner membrane. The catalysed reaction is UDP-N-acetyl-alpha-D-muramoyl-L-alanyl-gamma-D-glutamyl-meso-2,6-diaminopimeloyl-D-alanyl-D-alanine + di-trans,octa-cis-undecaprenyl phosphate = di-trans,octa-cis-undecaprenyl diphospho-N-acetyl-alpha-D-muramoyl-L-alanyl-D-glutamyl-meso-2,6-diaminopimeloyl-D-alanyl-D-alanine + UMP. It functions in the pathway cell wall biogenesis; peptidoglycan biosynthesis. Its function is as follows. Catalyzes the initial step of the lipid cycle reactions in the biosynthesis of the cell wall peptidoglycan: transfers peptidoglycan precursor phospho-MurNAc-pentapeptide from UDP-MurNAc-pentapeptide onto the lipid carrier undecaprenyl phosphate, yielding undecaprenyl-pyrophosphoryl-MurNAc-pentapeptide, known as lipid I. In Helicobacter pylori (strain Shi470), this protein is Phospho-N-acetylmuramoyl-pentapeptide-transferase.